A 318-amino-acid chain; its full sequence is EFTIFSLLFSLLLLNASAEQCGSQAGGALCAPGLCCSKFGWCGNTNDYCGPGNCQSQCPGGPGPSGDLGGVISNSMFDQMLNHRNDNACQGKNNFYSYNAFISAAGSFPGFGTTGDITARKREIAAFLAQTSHETTGGWPSAPDGPYAWGYCFLREQGSPGDYCTPSSQWPCAPGRKYFGRGPIQISHNYNYGPCGRAIGVDLLNNPDLVATDSVISFKSAIWFWMTPQSPKPSCHDVITGRWQPSGADQAANRVPGFGVITNIINGGLECGHGSDSRVQDRIGFYRRYCGILGVSPGDNLDCGNQRSFGNGLLVDTV.

The N-terminal stretch at 1 to 18 (EFTIFSLLFSLLLLNASA) is a signal peptide. A Chitin-binding type-1 domain is found at 19 to 60 (EQCGSQAGGALCAPGLCCSKFGWCGNTNDYCGPGNCQSQCPG). 7 disulfide bridges follow: Cys-21-Cys-36, Cys-30-Cys-42, Cys-35-Cys-49, Cys-54-Cys-58, Cys-89-Cys-152, Cys-164-Cys-172, and Cys-271-Cys-303. The Proton donor role is filled by Glu-134. Positions 312 to 318 (GLLVDTV) are cleaved as a propeptide — removed in mature form, vacuolar targeting.

The protein belongs to the glycosyl hydrolase 19 family. Chitinase class I subfamily.

Its subcellular location is the vacuole. It carries out the reaction Random endo-hydrolysis of N-acetyl-beta-D-glucosaminide (1-&gt;4)-beta-linkages in chitin and chitodextrins.. Defense against chitin-containing fungal pathogens. The protein is Endochitinase 3 (CHTB3) of Solanum tuberosum (Potato).